Reading from the N-terminus, the 190-residue chain is Elongation factor P-like protein (190 aa).

The protein belongs to the elongation factor P family.

The polypeptide is Elongation factor P-like protein (Shigella boydii serotype 4 (strain Sb227)).